A 169-amino-acid chain; its full sequence is Large ribosomal subunit protein uL23 (169 aa).

The tract at residues Met-1 to Ser-20 is disordered. A compositionally biased stretch (polar residues) spans Ser-8–Ser-20.

It belongs to the universal ribosomal protein uL23 family.

Its function is as follows. This protein binds to a specific region on the 26S rRNA. This Dictyostelium discoideum (Social amoeba) protein is Large ribosomal subunit protein uL23 (rpl23a).